A 293-amino-acid chain; its full sequence is Short-chain dehydrogenase/reductase PhomF (293 aa).

Ile-31 and Asn-102 together coordinate NADP(+). Ser-175 (proton donor) is an active-site residue. 3 residues coordinate NADP(+): Tyr-190, Lys-194, and Ser-225. Residue Tyr-190 is the Proton acceptor of the active site. Residue Lys-194 is the Lowers pKa of active site Tyr of the active site.

The protein belongs to the short-chain dehydrogenases/reductases (SDR) family.

Its function is as follows. Short-chain dehydrogenase/reductase; part of the gene cluster that mediates the biosynthesis of the phomopsins, a group of hexapeptide mycotoxins which infects lupins and causes lupinosis disease in livestock. The role of phomF within the phomopsins biosynthesis pathway has still to be determined. The pathway starts with the processing of the precursor phomA by several endopeptidases including kexin proteases as well as the cluster-specific S41 family peptidase phomP1 and the oligopeptidase phomG to produce 10 identical copies of the hexapeptide Tyr-Val-Ile-Pro-Ile-Asp. After being excised from the precursor peptide, the core peptides are cyclized and modified post-translationally by enzymes encoded within the gene cluster. The timing and order of proteolysis of the phomA precursor and PTMs are still unknown. Two tyrosinase-like enzymes, phomQ1 and phomQ2, catalyze the chlorination and hydroxylation of Tyr, respectively. PhomYb, is proposed to be involved in the construction of the macrocyclic structure. The other 4 ustYa family proteins may be involved in PTMs that generate the unique structure of phomopsin A. PhomYa is required for the hydroxylation of C-beta of Tyr. PhomYc, phomYd, and phomYe are responsible for the biosynthesis of 2,3-dehydroisoleucine (dIle), 2,3-dehydroaspartic acid (dAsp), and 3,4-dehydroproline (dPro), respectively. While dIle formation by phomYc is indispensable for the installation of dAsp by phomYd, the order of the other PTMs have not been elucidated yet. Most of the biosynthetic enzymes likely have broad substrate specificity, and thus, there might be a metabolic grid from a precursor to phomopsin A. The enzyme(s) responsible for the biosynthesis of 3,4-dehydrovaline (dVal) have also not been identified yet. Finally, phomM acts as an S-adenosylmethionine-dependent alpha-N-methyltransferase that catalyzes two successive N-methylation reactions, converting N-desmethyl-phomopsin A to phomopsin A and phomopsin A further to an N,N-dimethylated congener called phomopsin E. This chain is Short-chain dehydrogenase/reductase PhomF, found in Diaporthe leptostromiformis (Lupinosis disease fungus).